The sequence spans 211 residues: Adenylate kinase (211 aa).

An ATP-binding site is contributed by 13–18 (GAGKGT). The NMP stretch occupies residues 33 to 62 (STGDILRVAVANKTKLGLEAKKFMDAGQLV). Residues T34, R39, 60–62 (QLV), 88–91 (GFPR), and Q95 contribute to the AMP site. The LID stretch occupies residues 129–161 (GRRTSKVTGKIYHIKFNPPVDEKPEDLVQRADD). ATP is bound by residues R130 and 139-140 (IY). AMP is bound by residues R158 and R169. K197 contacts ATP.

Belongs to the adenylate kinase family. Monomer.

The protein localises to the cytoplasm. The catalysed reaction is AMP + ATP = 2 ADP. It functions in the pathway purine metabolism; AMP biosynthesis via salvage pathway; AMP from ADP: step 1/1. Functionally, catalyzes the reversible transfer of the terminal phosphate group between ATP and AMP. Plays an important role in cellular energy homeostasis and in adenine nucleotide metabolism. This chain is Adenylate kinase, found in Fusobacterium nucleatum subsp. nucleatum (strain ATCC 25586 / DSM 15643 / BCRC 10681 / CIP 101130 / JCM 8532 / KCTC 2640 / LMG 13131 / VPI 4355).